Consider the following 306-residue polypeptide: Mitochondrial substrate carrier family protein M (306 aa).

At 1 to 10 the chain is on the mitochondrial intermembrane side; the sequence is MRYILNNNVE. Solcar repeat units follow at residues 5–98, 108–195, and 207–299; these read LNNN…YKNI, LNTF…IKFY, and LNAS…IKKS. The helical transmembrane segment at 11 to 31 threads the bilayer; sequence GTSALLGSTVATAFLQPFDFL. The Mitochondrial matrix portion of the chain corresponds to 32–72; it reads KIRLQGSGFASGGDLNKFKRVGVIDTCKNVLKNEGIKQFWR. A helical membrane pass occupies residues 73–89; that stretch reads GSSPTIVASGIAWGTYM. The Mitochondrial intermembrane segment spans residues 90 to 113; the sequence is HFYEAYKNILKSKYNVTQLNTFDH. Residues 114-134 form a helical membrane-spanning segment; it reads FICAVGASATQVFITNPIFLI. At 135–163 the chain is on the mitochondrial matrix side; sequence KTRMQLQTPGSANYYTGIFDGIKKTVKVE. A helical transmembrane segment spans residues 164 to 184; sequence GFKGLYKGVIPSLWLTFHGGI. At 185 to 211 the chain is on the mitochondrial intermembrane side; the sequence is QMSSYEHIKFYFSSNSGKSLDSLNASE. The chain crosses the membrane as a helical span at residues 212–232; that stretch reads IFIASSISKFLASTILYPFQV. Over 233–278 the chain is Mitochondrial matrix; that stretch reads VKTRLQDERNIPNQNNVRVYNGTKDVIFKILKNEGIIGFYRGLVPN. The chain crosses the membrane as a helical span at residues 279–296; the sequence is TLKVIPNTSITLLLYEEI. Residues 297 to 306 lie on the Mitochondrial intermembrane side of the membrane; the sequence is KKSFNYIINE.

Belongs to the mitochondrial carrier (TC 2.A.29) family.

It localises to the mitochondrion inner membrane. Functionally, mitochondrial solute carriers shuttle metabolites, nucleotides, and cofactors through the mitochondrial inner membrane. Transports folate across the inner membranes of mitochondria. The polypeptide is Mitochondrial substrate carrier family protein M (mcfM) (Dictyostelium discoideum (Social amoeba)).